The following is a 326-amino-acid chain: uncharacterized protein (326 aa).

Solcar repeat units lie at residues glutamine 20 to lysine 107, leucine 120 to phenylalanine 219, and lysine 231 to serine 322. 6 helical membrane-spanning segments follow: residues isoleucine 24–valine 40, glycine 84–cysteine 104, leucine 126–leucine 143, valine 195–tyrosine 213, leucine 237–phenylalanine 254, and glycine 297–tyrosine 316.

It belongs to the mitochondrial carrier (TC 2.A.29) family.

Its subcellular location is the mitochondrion inner membrane. This is an uncharacterized protein from Saccharomyces cerevisiae (strain ATCC 204508 / S288c) (Baker's yeast).